A 361-amino-acid chain; its full sequence is Blue-sensitive opsin (361 aa).

Residues 1–43 are Extracellular-facing; that stretch reads MHPPRPTTDLPEDFYIPMALDAPNITALSPFLVPQTHLGSPGL. N-linked (GlcNAc...) asparagine glycosylation is present at Asn24. The helical transmembrane segment at 44–68 threads the bilayer; the sequence is FRAMAAFMFLLIALGVPINTLTIFC. Over 69-80 the chain is Cytoplasmic; sequence TARFRKLRSHLN. The chain crosses the membrane as a helical span at residues 81-106; sequence YILVNLALANLLVILVGSTTACYSFS. Residues 107–120 lie on the Extracellular side of the membrane; it reads QMYFALGPTACKIE. Cys117 and Cys194 are oxidised to a cystine. Residues 121–140 form a helical membrane-spanning segment; that stretch reads GFAATLGGMVSLWSLAVVAF. The Cytoplasmic portion of the chain corresponds to 141-159; that stretch reads ERFLVICKPLGNFTFRGSH. The chain crosses the membrane as a helical span at residues 160 to 183; sequence AVLGCVATWVLGFVASAPPLFGWS. Topologically, residues 184-209 are extracellular; sequence RYIPEGLQCSCGPDWYTTDNKWHNES. The helical transmembrane segment at 210–237 threads the bilayer; it reads YVLFLFTFCFGVPLAIIVFSYGRLLITL. The Cytoplasmic portion of the chain corresponds to 238–259; the sequence is RAVARQQEQSATTQKADREVTK. A helical membrane pass occupies residues 260–283; sequence MVVVMVLGFLVCWAPYTAFALWVV. Residues 284–291 lie on the Extracellular side of the membrane; that stretch reads THRGRSFE. Residues 292 to 316 traverse the membrane as a helical segment; the sequence is VGLASIPSVFSKSSTVYNPVIYVLM. Lys303 is subject to N6-(retinylidene)lysine. The Cytoplasmic portion of the chain corresponds to 317–361; the sequence is NKQFRSCMLKLLFCGRSPFGDDEDVSGSSQATQVSSVSSSHVAPA. A disordered region spans residues 338–361; that stretch reads DEDVSGSSQATQVSSVSSSHVAPA. Over residues 342–361 the composition is skewed to low complexity; it reads SGSSQATQVSSVSSSHVAPA.

This sequence belongs to the G-protein coupled receptor 1 family. Opsin subfamily. Post-translationally, phosphorylated on some or all of the serine and threonine residues present in the C-terminal region. As to expression, the color pigments are found in the cone photoreceptor cells.

Its subcellular location is the membrane. Its function is as follows. Visual pigments are the light-absorbing molecules that mediate vision. They consist of an apoprotein, opsin, covalently linked to cis-retinal. This Gallus gallus (Chicken) protein is Blue-sensitive opsin.